The chain runs to 262 residues: Putative hydro-lyase cu1581 (262 aa).

Belongs to the D-glutamate cyclase family.

This Corynebacterium urealyticum (strain ATCC 43042 / DSM 7109) protein is Putative hydro-lyase cu1581.